A 68-amino-acid chain; its full sequence is Large ribosomal subunit protein bL32 (68 aa).

The protein belongs to the bacterial ribosomal protein bL32 family.

This Orientia tsutsugamushi (strain Ikeda) (Rickettsia tsutsugamushi) protein is Large ribosomal subunit protein bL32.